The primary structure comprises 235 residues: Ribose-5-phosphate isomerase A (235 aa).

Substrate is bound by residues 32–35, 89–92, and 102–105; these read TGST, DGAD, and KGGG. Residue E111 is the Proton acceptor of the active site. K129 contacts substrate.

The protein belongs to the ribose 5-phosphate isomerase family. Homodimer.

It catalyses the reaction aldehydo-D-ribose 5-phosphate = D-ribulose 5-phosphate. The protein operates within carbohydrate degradation; pentose phosphate pathway; D-ribose 5-phosphate from D-ribulose 5-phosphate (non-oxidative stage): step 1/1. Its function is as follows. Catalyzes the reversible conversion of ribose-5-phosphate to ribulose 5-phosphate. In Synechocystis sp. (strain ATCC 27184 / PCC 6803 / Kazusa), this protein is Ribose-5-phosphate isomerase A.